We begin with the raw amino-acid sequence, 165 residues long: Small histone ubiquitination factor 1 (165 aa).

The span at 1 to 17 shows a compositional bias: basic and acidic residues; that stretch reads MSSRRNDYHYDGNDHQY. The segment at 1–86 is disordered; that stretch reads MSSRRNDYHY…STRASFGAAS (86 aa). Low complexity-rich tracts occupy residues 29–38 and 50–60; these read SFYESSYRSR and SSYDSPSSSTN. The segment covering 73–86 has biased composition (polar residues); that stretch reads PSNNSTRASFGAAS.

Component of the histone H2B ubiquitin ligase complex (HULC) composed of at least brl1, brl2, rhp6 and shf1.

The protein localises to the nucleus. It localises to the cytoplasm. The protein resides in the cytoskeleton. It is found in the microtubule organizing center. Its subcellular location is the spindle pole body. Functionally, component of the histone H2B ubiquitin ligase complex (HULC) which plays a role in transcription regulation by catalyzing the monoubiquitination of histone H2B to form H2BK123ub1. H2BK123ub1 gives a specific tag for epigenetic transcriptional activation and is also a prerequisite for H3K4me and H3K79me formation. The protein is Small histone ubiquitination factor 1 (shf1) of Schizosaccharomyces pombe (strain 972 / ATCC 24843) (Fission yeast).